A 212-amino-acid chain; its full sequence is Large ribosomal subunit protein uL1 (212 aa).

This sequence belongs to the universal ribosomal protein uL1 family. As to quaternary structure, part of the 50S ribosomal subunit.

Binds directly to 23S rRNA. Probably involved in E site tRNA release. Functionally, protein L1 is also a translational repressor protein, it controls the translation of its operon by binding to its mRNA. The chain is Large ribosomal subunit protein uL1 from Methanosphaera stadtmanae (strain ATCC 43021 / DSM 3091 / JCM 11832 / MCB-3).